The sequence spans 591 residues: Aspartate--tRNA ligase (591 aa).

Glu-174 contributes to the L-aspartate binding site. Residues 198–201 (QLFK) form an aspartate region. An L-aspartate-binding site is contributed by Arg-220. Residues 220–222 (RDE) and Gln-229 each bind ATP. Residue His-450 participates in L-aspartate binding. Residue Glu-486 participates in ATP binding. Residue Arg-493 participates in L-aspartate binding. 538–541 (GLDR) is an ATP binding site.

It belongs to the class-II aminoacyl-tRNA synthetase family. Type 1 subfamily. In terms of assembly, homodimer.

The protein localises to the cytoplasm. The catalysed reaction is tRNA(Asp) + L-aspartate + ATP = L-aspartyl-tRNA(Asp) + AMP + diphosphate. Catalyzes the attachment of L-aspartate to tRNA(Asp) in a two-step reaction: L-aspartate is first activated by ATP to form Asp-AMP and then transferred to the acceptor end of tRNA(Asp). The polypeptide is Aspartate--tRNA ligase (Leuconostoc mesenteroides subsp. mesenteroides (strain ATCC 8293 / DSM 20343 / BCRC 11652 / CCM 1803 / JCM 6124 / NCDO 523 / NBRC 100496 / NCIMB 8023 / NCTC 12954 / NRRL B-1118 / 37Y)).